A 142-amino-acid chain; its full sequence is Transcriptional regulator MraZ (142 aa).

SpoVT-AbrB domains are found at residues 5-47 (EFTH…PLNE) and 76-119 (ATDC…SAER).

It belongs to the MraZ family. As to quaternary structure, forms oligomers.

The protein resides in the cytoplasm. It is found in the nucleoid. The sequence is that of Transcriptional regulator MraZ from Limosilactobacillus reuteri (strain DSM 20016) (Lactobacillus reuteri).